The primary structure comprises 66 residues: Large ribosomal subunit protein bL35 (66 aa).

It belongs to the bacterial ribosomal protein bL35 family.

The protein is Large ribosomal subunit protein bL35 of Synechococcus sp. (strain JA-2-3B'a(2-13)) (Cyanobacteria bacterium Yellowstone B-Prime).